Reading from the N-terminus, the 211-residue chain is Uracil phosphoribosyltransferase (211 aa).

5-phospho-alpha-D-ribose 1-diphosphate contacts are provided by residues R77, R102, and 129–137 (DPMLATGGS). Uracil contacts are provided by residues I192 and 197-199 (GDA). D198 contacts 5-phospho-alpha-D-ribose 1-diphosphate.

The protein belongs to the UPRTase family. It depends on Mg(2+) as a cofactor.

It catalyses the reaction UMP + diphosphate = 5-phospho-alpha-D-ribose 1-diphosphate + uracil. Its pathway is pyrimidine metabolism; UMP biosynthesis via salvage pathway; UMP from uracil: step 1/1. Its activity is regulated as follows. Allosterically activated by GTP. Functionally, catalyzes the conversion of uracil and 5-phospho-alpha-D-ribose 1-diphosphate (PRPP) to UMP and diphosphate. This is Uracil phosphoribosyltransferase from Corynebacterium glutamicum (strain R).